The sequence spans 94 residues: Co-chaperonin GroES (94 aa).

The protein belongs to the GroES chaperonin family. As to quaternary structure, heptamer of 7 subunits arranged in a ring. Interacts with the chaperonin GroEL.

Its subcellular location is the cytoplasm. In terms of biological role, together with the chaperonin GroEL, plays an essential role in assisting protein folding. The GroEL-GroES system forms a nano-cage that allows encapsulation of the non-native substrate proteins and provides a physical environment optimized to promote and accelerate protein folding. GroES binds to the apical surface of the GroEL ring, thereby capping the opening of the GroEL channel. The sequence is that of Co-chaperonin GroES from Streptococcus oralis.